The following is a 463-amino-acid chain: MTIGLSVTNDVFARDILTVAQLNQAVGQLLERSIPSLWVRGEISNFTQAASGHWYFTLKDSRAAVRTVMFRSRAAQVGFVPRPGDQVEVRARVSLYEPRGDYQLQADGMRRAGVGNLYEAFLRLKAQLQDEGLFDPQRKRQPARLPRAIGVVTSLHAAALRDVLSALARRAPQVPVIIYPAPVQGADAAARLAARVAQANQRAEVDTLLLVRGGGSIEDLWSFNDEALAREVAASDIPVISGVGHETDFTIVDFVADLRAPTPTAAAELACVPRGDLLAALRHTAERLARAQQRRLDQAAQRLDRAAAMLTSPAQRLAHQQERLNTLRHRLASAWRGPQGRRVARLDMLAQRLAHRRPDTGRAAERSAALLAQLGRAQARLAAARQARLDTLAAQLRALDPQHTLARGYAIVRDAAGAIVTDATRLAARDRIEIAVARGRIGADVTDIGTPDGTDGNPALRRG.

This sequence belongs to the XseA family. In terms of assembly, heterooligomer composed of large and small subunits.

It is found in the cytoplasm. The enzyme catalyses Exonucleolytic cleavage in either 5'- to 3'- or 3'- to 5'-direction to yield nucleoside 5'-phosphates.. In terms of biological role, bidirectionally degrades single-stranded DNA into large acid-insoluble oligonucleotides, which are then degraded further into small acid-soluble oligonucleotides. The protein is Exodeoxyribonuclease 7 large subunit of Bordetella bronchiseptica (strain ATCC BAA-588 / NCTC 13252 / RB50) (Alcaligenes bronchisepticus).